Reading from the N-terminus, the 248-residue chain is Proteasome subunit alpha (248 aa).

This sequence belongs to the peptidase T1A family. In terms of assembly, the 20S proteasome core is composed of 14 alpha and 14 beta subunits that assemble into four stacked heptameric rings, resulting in a barrel-shaped structure. The two inner rings, each composed of seven catalytic beta subunits, are sandwiched by two outer rings, each composed of seven alpha subunits. The catalytic chamber with the active sites is on the inside of the barrel. Has a gated structure, the ends of the cylinder being occluded by the N-termini of the alpha-subunits. Is capped by the proteasome-associated ATPase, ARC.

It localises to the cytoplasm. The protein operates within protein degradation; proteasomal Pup-dependent pathway. The formation of the proteasomal ATPase ARC-20S proteasome complex, likely via the docking of the C-termini of ARC into the intersubunit pockets in the alpha-rings, may trigger opening of the gate for substrate entry. Interconversion between the open-gate and close-gate conformations leads to a dynamic regulation of the 20S proteasome proteolysis activity. Component of the proteasome core, a large protease complex with broad specificity involved in protein degradation. This is Proteasome subunit alpha from Mycobacterium bovis (strain BCG / Pasteur 1173P2).